Reading from the N-terminus, the 201-residue chain is Rho GDP-dissociation inhibitor 2 (201 aa).

The interval Met-1–Met-38 is disordered. The residue at position 2 (Thr-2) is an N-acetylthreonine. Lys-21 is modified (N6-acetyllysine). Tyr-24 bears the Phosphotyrosine mark. N6-acetyllysine occurs at positions 25, 40, 47, 102, and 124. At Ser-145 the chain carries Phosphoserine. An N6-acetyllysine modification is found at Lys-175.

The protein belongs to the Rho GDI family. As to quaternary structure, interacts with RHOA. Interacts with RAC1. Interacts with RAC2. Interacts with CDC42. As to expression, detected in bone marrow, thymus and spleen.

The protein resides in the cytoplasm. It is found in the cytosol. Regulates the GDP/GTP exchange reaction of the Rho proteins by inhibiting the dissociation of GDP from them, and the subsequent binding of GTP to them. Regulates reorganization of the actin cytoskeleton mediated by Rho family members. The protein is Rho GDP-dissociation inhibitor 2 (ARHGDIB) of Homo sapiens (Human).